We begin with the raw amino-acid sequence, 202 residues long: MDIEKIYKEHGAFLEGHFLLSSGNHSQFYLQSAKILEFPWIAGELANELFNVIKNAGIEFDSVCSPALGGILAGYELAKSAHKRFIFTERVDKKMTLRRGFSVSKGEKFIVCEDIITTGGSALESAKIIESLGGEVVAFAALANRGFCAVQNLGNERKESCKLPFNKPLFTLGNFEFDIYEPENCPLCKTGSVAIKPGSRGN.

Residues Lys-93 and 113–121 (EDIITTGGS) each bind 5-phospho-alpha-D-ribose 1-diphosphate. 2 residues coordinate orotate: Thr-117 and Arg-145.

It belongs to the purine/pyrimidine phosphoribosyltransferase family. PyrE subfamily. In terms of assembly, homodimer. Mg(2+) serves as cofactor.

It carries out the reaction orotidine 5'-phosphate + diphosphate = orotate + 5-phospho-alpha-D-ribose 1-diphosphate. Its pathway is pyrimidine metabolism; UMP biosynthesis via de novo pathway; UMP from orotate: step 1/2. In terms of biological role, catalyzes the transfer of a ribosyl phosphate group from 5-phosphoribose 1-diphosphate to orotate, leading to the formation of orotidine monophosphate (OMP). In Campylobacter hominis (strain ATCC BAA-381 / DSM 21671 / CCUG 45161 / LMG 19568 / NCTC 13146 / CH001A), this protein is Orotate phosphoribosyltransferase.